We begin with the raw amino-acid sequence, 323 residues long: tRNA U34 carboxymethyltransferase (323 aa).

Residues lysine 91, tryptophan 105, lysine 110, glycine 130, aspartate 152–threonine 154, isoleucine 181–glutamate 182, methionine 196, tyrosine 200, and arginine 315 each bind carboxy-S-adenosyl-L-methionine.

Belongs to the class I-like SAM-binding methyltransferase superfamily. CmoB family. Homotetramer.

The catalysed reaction is carboxy-S-adenosyl-L-methionine + 5-hydroxyuridine(34) in tRNA = 5-carboxymethoxyuridine(34) in tRNA + S-adenosyl-L-homocysteine + H(+). In terms of biological role, catalyzes carboxymethyl transfer from carboxy-S-adenosyl-L-methionine (Cx-SAM) to 5-hydroxyuridine (ho5U) to form 5-carboxymethoxyuridine (cmo5U) at position 34 in tRNAs. The sequence is that of tRNA U34 carboxymethyltransferase from Escherichia coli O81 (strain ED1a).